We begin with the raw amino-acid sequence, 324 residues long: 26S proteasome non-ATPase regulatory subunit 7 (324 aa).

The MPN domain occupies Val-9 to Val-144. Lys-180 is covalently cross-linked (Glycyl lysine isopeptide (Lys-Gly) (interchain with G-Cter in ubiquitin)). N6-acetyllysine occurs at positions 204, 214, 316, and 317. The tract at residues Ala-281–Lys-324 is disordered.

The protein belongs to the peptidase M67A family. In terms of assembly, component of the 19S proteasome regulatory particle complex. The 26S proteasome consists of a 20S core particle (CP) and two 19S regulatory subunits (RP). The regulatory particle is made of a lid composed of 9 subunits including PSMD7, a base containing 6 ATPases and few additional components. Within the complex, PSMD7 interacts with subunit PSMD4 through their respective MPN domain. Interacts with TRIM5.

In terms of biological role, component of the 26S proteasome, a multiprotein complex involved in the ATP-dependent degradation of ubiquitinated proteins. This complex plays a key role in the maintenance of protein homeostasis by removing misfolded or damaged proteins, which could impair cellular functions, and by removing proteins whose functions are no longer required. Therefore, the proteasome participates in numerous cellular processes, including cell cycle progression, apoptosis, or DNA damage repair. The protein is 26S proteasome non-ATPase regulatory subunit 7 (PSMD7) of Homo sapiens (Human).